The following is a 163-amino-acid chain: D-aminoacyl-tRNA deacylase (163 aa).

A Gly-cisPro motif, important for rejection of L-amino acids motif is present at residues G141–P142.

Belongs to the DTD family. In terms of assembly, homodimer.

It localises to the cytoplasm. It catalyses the reaction glycyl-tRNA(Ala) + H2O = tRNA(Ala) + glycine + H(+). The catalysed reaction is a D-aminoacyl-tRNA + H2O = a tRNA + a D-alpha-amino acid + H(+). Its function is as follows. An aminoacyl-tRNA editing enzyme that deacylates mischarged D-aminoacyl-tRNAs. Also deacylates mischarged glycyl-tRNA(Ala), protecting cells against glycine mischarging by AlaRS. Acts via tRNA-based rather than protein-based catalysis; rejects L-amino acids rather than detecting D-amino acids in the active site. By recycling D-aminoacyl-tRNA to D-amino acids and free tRNA molecules, this enzyme counteracts the toxicity associated with the formation of D-aminoacyl-tRNA entities in vivo and helps enforce protein L-homochirality. The chain is D-aminoacyl-tRNA deacylase from Neisseria meningitidis serogroup A / serotype 4A (strain DSM 15465 / Z2491).